Here is a 1134-residue protein sequence, read N- to C-terminus: Vinculin (1134 aa).

The N-terminal globular head stretch occupies residues 1–835; that stretch reads MPVFHTRTIE…GAVAKVREAF (835 aa). The residue at position 97 (Ser-97) is a Phosphoserine. The tract at residues 168–208 is talin-interaction; the sequence is MTKMAKMIDERQQELTHQEHRVMLVNSMNTVKELLPVLISA. Lys-173 carries the post-translational modification N6-acetyllysine. Repeat copies occupy residues 259 to 369, 370 to 479, and 480 to 589. Residues 259–589 form a 3 X 112 AA tandem repeats region; sequence ASKDTEAMKR…LKDLKARMQE (331 aa). Ser-260, Ser-272, Ser-275, Ser-288, Ser-290, Ser-346, and Ser-434 each carry phosphoserine. Lys-496 is subject to N6-acetyllysine. A Phosphotyrosine modification is found at Tyr-537. Residues Ser-574, Ser-579, and Ser-600 each carry the phosphoserine modification. 2 positions are modified to phosphothreonine: Thr-604 and Thr-672. Position 721 is a phosphoserine (Ser-721). The tract at residues 741–764 is interaction with ACTN4; the sequence is MANIQPQMLVAGATSIARRANRIL. Ser-795 and Ser-809 each carry phosphoserine. Tyr-822 is modified (phosphotyrosine). Positions 836–878 are linker (Pro-rich); that stretch reads QPQEPDFPPPPPDLEQLRLTDELAPPKPPLPEGEVPPPRPPPP. Residues 857–887 are disordered; the sequence is ELAPPKPPLPEGEVPPPRPPPPEEKDEEFPE. A compositionally biased stretch (pro residues) spans 860–876; that stretch reads PPKPPLPEGEVPPPRPP. The tract at residues 879–1134 is C-terminal tail; sequence EEKDEEFPEQ…RWVRKTPWYQ (256 aa). Facilitates phospholipid membrane insertion stretches follow at residues 1003-1046 and 1120-1134; these read RLVR…KRIR and AGFT…PWYQ. At Tyr-1133 the chain carries Phosphotyrosine; by SRC-type Tyr-kinases.

This sequence belongs to the vinculin/alpha-catenin family. In terms of assembly, exhibits self-association properties. Part of a complex composed of THSD1, PTK2/FAK1, TLN1 and VCL. Interacts with APBB1IP and NRAP. Interacts with TLN1. Interacts with CTNNB1 and this interaction is necessary for its localization to the cell-cell junctions and for its function in regulating cell surface expression of E-cadherin. Interacts with SYNM. Interacts with SORBS1. Interacts with CTNNA1. Binds to ACTN4; this interaction triggers conformational changes. Interacts with FLII. As to quaternary structure, (Microbial infection) Interacts via its globular head domain with the central portion of S.flexneri IcsA (also called VirG). In terms of processing, phosphorylated; on serines, threonines and tyrosines. Phosphorylation on Tyr-1133 in activated platelets affects head-tail interactions and cell spreading but has no effect on actin binding nor on localization to focal adhesion plaques. Post-translationally, acetylated; mainly by myristic acid but also by a small amount of palmitic acid. Metavinculin is muscle-specific.

Its subcellular location is the cell membrane. The protein localises to the cell junction. It localises to the adherens junction. It is found in the focal adhesion. The protein resides in the cytoplasm. Its subcellular location is the cytoskeleton. The protein localises to the sarcolemma. It localises to the cell projection. It is found in the podosome. Its function is as follows. Actin filament (F-actin)-binding protein involved in cell-matrix adhesion and cell-cell adhesion. Regulates cell-surface E-cadherin expression and potentiates mechanosensing by the E-cadherin complex. May also play important roles in cell morphology and locomotion. The polypeptide is Vinculin (VCL) (Homo sapiens (Human)).